A 478-amino-acid chain; its full sequence is Amino acid oxidase imqH (478 aa).

Residues 1 to 22 (MPAPKSIIIVGSGVFGLSTAHA) form the signal peptide. Positions 14, 15, 38, 53, 57, 58, 63, and 64 each coordinate FAD. 2 N-linked (GlcNAc...) asparagine glycosylation sites follow: N97 and N167. V208 provides a ligand contact to FAD. The residue at position 399 (C399) is an S-8alpha-FAD cysteine. 2 residues coordinate FAD: F432 and K433.

The protein belongs to the MSOX/MTOX family. As to quaternary structure, dimer. The cofactor is FAD.

It participates in secondary metabolite biosynthesis. In terms of biological role, nonribosomal peptide synthetase; part of the gene cluster that mediates the biosynthesis of imizoquins A to D, tripeptide-derived alkaloids that serve a protective role against oxidative stress that are essential for normal germination. ImqB is a canonical three-module NRPS that assembles the tripeptide backbone of the imizoquins via condensation of Trp, Tyr, and Leu-derived precursors. N-methylation by imqF and phenol oxidation by imqC, followed by cyclization via the FAD-dependent oxidase imqH carry out the three-step transformation of L-tyrosine into tetrahydroisoquinoline. Importantly, this sequence requires the presence of a free amine in the tyrosine moiety, indicating that isoquinoline formation occurs prior to peptide bond formation. The imidazolidin-4-one ring of imizoquins could form following additional oxidation of the methyl-derived bridgehead carbon by imqH. Lastly, O-methylation by imqG and leucine hydroxylation by imqE complete biosynthesis of the imizoquins. In Aspergillus flavus (strain ATCC 200026 / FGSC A1120 / IAM 13836 / NRRL 3357 / JCM 12722 / SRRC 167), this protein is Amino acid oxidase imqH.